Reading from the N-terminus, the 202-residue chain is UPF0056 membrane protein CPn_1010/CP_0843/CPj1010/CpB1048 (202 aa).

6 helical membrane-spanning segments follow: residues 7 to 27 (LSLL…FVAL), 39 to 59 (VILR…TFGR), 61 to 81 (FFQF…FLLF), 105 to 125 (PIFF…TALL), 137 to 157 (IIFT…LCSS), and 175 to 195 (FGIA…SIAF).

It belongs to the UPF0056 (MarC) family.

It is found in the cell membrane. This chain is UPF0056 membrane protein CPn_1010/CP_0843/CPj1010/CpB1048, found in Chlamydia pneumoniae (Chlamydophila pneumoniae).